The following is a 195-amino-acid chain: ATP-dependent Clp protease proteolytic subunit (195 aa).

The Nucleophile role is filled by serine 98. Histidine 123 is a catalytic residue.

It belongs to the peptidase S14 family. In terms of assembly, fourteen ClpP subunits assemble into 2 heptameric rings which stack back to back to give a disk-like structure with a central cavity, resembling the structure of eukaryotic proteasomes.

Its subcellular location is the cytoplasm. The catalysed reaction is Hydrolysis of proteins to small peptides in the presence of ATP and magnesium. alpha-casein is the usual test substrate. In the absence of ATP, only oligopeptides shorter than five residues are hydrolyzed (such as succinyl-Leu-Tyr-|-NHMec, and Leu-Tyr-Leu-|-Tyr-Trp, in which cleavage of the -Tyr-|-Leu- and -Tyr-|-Trp bonds also occurs).. In terms of biological role, cleaves peptides in various proteins in a process that requires ATP hydrolysis. Has a chymotrypsin-like activity. Plays a major role in the degradation of misfolded proteins. The chain is ATP-dependent Clp protease proteolytic subunit from Wolinella succinogenes (strain ATCC 29543 / DSM 1740 / CCUG 13145 / JCM 31913 / LMG 7466 / NCTC 11488 / FDC 602W) (Vibrio succinogenes).